The primary structure comprises 517 residues: Ribonuclease Y (517 aa).

A helical membrane pass occupies residues 1 to 21 (MIESLIALIAAIVGLGIGYLV). The KH domain occupies 207 to 273 (LINVINIKND…TKVIELLVED (67 aa)). One can recognise an HD domain in the interval 333-426 (ALAHSLEVAH…VCAADTLSAA (94 aa)).

The protein belongs to the RNase Y family.

It localises to the cell membrane. Its function is as follows. Endoribonuclease that initiates mRNA decay. This Campylobacter jejuni subsp. jejuni serotype O:2 (strain ATCC 700819 / NCTC 11168) protein is Ribonuclease Y.